Here is a 174-residue protein sequence, read N- to C-terminus: Transcriptional repressor NrdR (174 aa).

A zinc finger lies at Cys3–Cys34. Positions Pro49–Asp139 constitute an ATP-cone domain.

The protein belongs to the NrdR family. Zn(2+) is required as a cofactor.

Functionally, negatively regulates transcription of bacterial ribonucleotide reductase nrd genes and operons by binding to NrdR-boxes. This Xanthomonas campestris pv. campestris (strain 8004) protein is Transcriptional repressor NrdR.